The following is a 416-amino-acid chain: Trehalose synthase (416 aa).

This sequence belongs to the glycosyltransferase group 1 family. Glycosyltransferase 4 subfamily. In terms of assembly, homodimer. The cofactor is Mg(2+).

The catalysed reaction is an NDP-alpha-D-glucose + D-glucose = alpha,alpha-trehalose + a ribonucleoside 5'-diphosphate + H(+). With respect to regulation, inhibited by 20 mM Fe(3+) and Mn(2+). Partially inhibited by Zn(2+) and Ni(2+). Activity is slightly enhanced by 2 mM Fe (3+), Mn (2+), Ca(2+) or Li(+) and by 20 mM Mg(2+), Ca(2+) or Li(+). In terms of biological role, synthesizes trehalose from ADP-glucose and glucose. The reaction is reversible, the equilibrium strongly favors trehalose synthesis. In Rubrobacter xylanophilus (strain DSM 9941 / JCM 11954 / NBRC 16129 / PRD-1), this protein is Trehalose synthase.